The following is a 956-amino-acid chain: ATPase 11, plasma membrane-type (956 aa).

The Cytoplasmic segment spans residues 1–65 (MGDKEEVLEA…EKKESKFLKF (65 aa)). Residues 66–85 (LGFMWNPLSWVMEAAAIMAI) traverse the membrane as a helical segment. Over 86-97 (ALANGGGKPPDW) the chain is Extracellular. The chain crosses the membrane as a helical span at residues 98-118 (QDFVGIITLLVINSTISFIEE). Residues 119–247 (NNAGNAAAAL…GHFQQVLTAI (129 aa)) are Cytoplasmic-facing. The helical transmembrane segment at 248–268 (GNFCICSIAVGMIIEIVVMYP) threads the bilayer. The Extracellular portion of the chain corresponds to 269 to 277 (IQHRAYRPG). Residues 278–295 (IDNLLVLLIGGIPIAMPT) traverse the membrane as a helical segment. At 296 to 647 (VLSVTMAIGS…TSRAIFQRMK (352 aa)) the chain is on the cytoplasmic side. The active-site 4-aspartylphosphate intermediate is the Asp-333. Asp-592 and Asp-596 together coordinate Mg(2+). Residues 648 to 669 (NYTIYAVSITIRIVLGFMLLAL) form a helical membrane-spanning segment. Residues 670 to 674 (IWKFD) are Extracellular-facing. A helical membrane pass occupies residues 675–697 (FPPFMVLIIAILNDGTIMTISKD). Topologically, residues 698 to 713 (RVKPSPLPDSWKLSEI) are cytoplasmic. The helical transmembrane segment at 714-734 (FATGVVFGSYMAMMTVIFFWA) threads the bilayer. Residues 735–759 (AYKTDFFPRTFGVSTLEKTAHDDFR) are Extracellular-facing. A helical transmembrane segment spans residues 760-780 (KLASAIYLQVSIISQALIFVT). At 781 to 792 (RSRSWSYVERPG) the chain is on the cytoplasmic side. A helical transmembrane segment spans residues 793 to 813 (MLLVVAFILAQLVATLIAVYA). Residues 814–821 (NWSFAAIE) lie on the Extracellular side of the membrane. A helical membrane pass occupies residues 822–842 (GIGWGWAGVIWLYNIVFYIPL). At 843–956 (DIIKFLIRYA…IETIQQAYTV (114 aa)) the chain is on the cytoplasmic side. The residue at position 889 (Thr-889) is a Phosphothreonine. Ser-938 bears the Phosphoserine mark. The interval 954–956 (YTV) is interaction with 14-3-3 proteins. Residue Thr-955 is modified to Phosphothreonine.

It belongs to the cation transport ATPase (P-type) (TC 3.A.3) family. Type IIIA subfamily. In terms of assembly, binds to 14-3-3 proteins. The binding is induced by phosphorylation of Thr-955. Binding to 14-3-3 proteins activates the H(+)-ATPase. As to expression, expressed in guard cells, mesophyll cells, leaves and roots.

Its subcellular location is the membrane. It carries out the reaction ATP + H2O + H(+)(in) = ADP + phosphate + 2 H(+)(out). The plasma membrane H(+) ATPase of plants and fungi generates a proton gradient that drives the active transport of nutrients by H(+)-symport. The resulting external acidification and/or internal alkinization may mediate growth responses. This is ATPase 11, plasma membrane-type (AHA11) from Arabidopsis thaliana (Mouse-ear cress).